The sequence spans 1052 residues: Kinesin-like protein KIF11 (1052 aa).

Residues 17 to 358 (NIQVVVRCRP…LEYAHRAKNI (342 aa)) form the Kinesin motor domain. 104–111 (GQTGTGKT) is an ATP binding site. K145 is modified (N6-acetyllysine). Positions 364–478 (VNQKLTKKAL…ETKLQLVKEE (115 aa)) form a coiled coil. The residue at position 457 (T457) is a Phosphothreonine. K476 participates in a covalent cross-link: Glycyl lysine isopeptide (Lys-Gly) (interchain with G-Cter in SUMO2). A Phosphothreonine modification is found at T925. Disordered regions lie at residues 950 to 1026 (LQKK…LNPV) and 1033 to 1052 (EASD…SINL). A coiled-coil region spans residues 963-988 (EASKETSQDMDEEREALEQCTEELVS). Residues 1016-1026 (KDKENRGLNPV) show a composition bias toward basic and acidic residues.

It belongs to the TRAFAC class myosin-kinesin ATPase superfamily. Kinesin family. BimC subfamily. Interacts with the thyroid hormone receptor in the presence of thyroid hormone. Component of a large chromatin remodeling complex, at least composed of MYSM1, PCAF, RBM10 and KIF11/TRIP5. Interacts with RARRES1 and AGBL2. Phosphorylated exclusively on serine during S phase, but on both serine and Thr-925 during mitosis, so controlling the association of KIF11 with the spindle apparatus (probably during early prophase).

Its subcellular location is the cytoplasm. It localises to the cytoskeleton. It is found in the spindle pole. Motor protein required for establishing a bipolar spindle during mitosis. Required in non-mitotic cells for transport of secretory proteins from the Golgi complex to the cell surface. The protein is Kinesin-like protein KIF11 (Kif11) of Mus musculus (Mouse).